The primary structure comprises 73 residues: Homeodomain-only protein (73 aa).

The homeobox; degenerate DNA-binding region spans 3-62; it reads TEKSVTPTEEQLEILEYNFCKVNKHPDPTTLCLIAAETGLSEEQTLKWFKQRLAEWRKSE.

It is found in the nucleus. Its subcellular location is the cytoplasm. Functionally, atypical homeodomain protein which does not bind DNA and is required to modulate cardiac growth and development. May act via an interaction with SRF, leading to modulate the expression of SRF-dependent cardiac-specific genes and cardiac development. May act as a co-chaperone for HSPA1A and HSPA1B chaperone proteins and assist in chaperone-mediated protein refolding. The polypeptide is Homeodomain-only protein (HOPX) (Gallus gallus (Chicken)).